Here is a 316-residue protein sequence, read N- to C-terminus: Protein lifeguard 2 (316 aa).

Residues 1 to 49 (MTQGKLSVANKAPGTEGQQQANGEKKDAPAVPSAPPSYEEATSGEGLKA) form a disordered region. Transmembrane regions (helical) follow at residues 106–126 (VYTILLVQLLVTLAVVALFTF), 138–158 (PGWYWASYAVFFATYLTLACC), and 165–185 (FPWNLILLTIFTLSMAYLTGM). N-linked (GlcNAc...) asparagine glycosylation is present at Asn-191. A run of 4 helical transmembrane segments spans residues 194-214 (SVLLCLGITALVCLSVTIFSF), 225-245 (GVLFVLLMTLFFSGLLLAILL), 251-271 (PWLHAVYAVLGAGVFTLFLAF), and 290-310 (IFGALNIYLDIIYIFTFFLQL).

This sequence belongs to the BI1 family. LFG subfamily. Interacts with FAS/TNFRSF6 and BAX. As to expression, expressed at high levels on dendrites and to a lesser extent on the soma and axons of neurons in various regions of brain.

The protein resides in the cell membrane. It localises to the membrane raft. Its subcellular location is the postsynaptic cell membrane. Antiapoptotic protein which protects cells uniquely from Fas-induced apoptosis. Regulates Fas-mediated apoptosis in neurons by interfering with caspase-8 activation. Plays a role in cerebellar development by affecting cerebellar size, internal granular layer (IGL) thickness, and Purkinje cell (PC) development. The polypeptide is Protein lifeguard 2 (Faim2) (Rattus norvegicus (Rat)).